Reading from the N-terminus, the 313-residue chain is Protein FixB (313 aa).

255-283 (LYLAVGISGQIQHMVGANASQTIFAINKD) serves as a coordination point for FAD.

Belongs to the ETF alpha-subunit/FixB family. Heterodimer of FixA and FixB.

It participates in amine and polyamine metabolism; carnitine metabolism. Its function is as follows. Required for anaerobic carnitine reduction. May bring reductant to CaiA. In Escherichia coli O81 (strain ED1a), this protein is Protein FixB.